Reading from the N-terminus, the 47-residue chain is uncharacterized protein (47 aa).

Disordered regions lie at residues 1–20 (MSTDNFEKIKGRPTQKEEWQ) and 25–47 (EKEKDENNRLFQEQKQKTTNRKG). Positions 25–40 (EKEKDENNRLFQEQKQ) are enriched in basic and acidic residues.

This is an uncharacterized protein from Dictyostelium discoideum (Social amoeba).